The primary structure comprises 234 residues: Glucosamine-6-phosphate deaminase (234 aa).

Aspartate 62 serves as the catalytic Proton acceptor; for enolization step. Asparagine 128 acts as the For ring-opening step in catalysis. The Proton acceptor; for ring-opening step role is filled by histidine 130. Glutamate 135 serves as the catalytic For ring-opening step.

The protein belongs to the glucosamine/galactosamine-6-phosphate isomerase family. NagB subfamily.

It catalyses the reaction alpha-D-glucosamine 6-phosphate + H2O = beta-D-fructose 6-phosphate + NH4(+). Its pathway is amino-sugar metabolism; N-acetylneuraminate degradation; D-fructose 6-phosphate from N-acetylneuraminate: step 5/5. In terms of biological role, catalyzes the reversible isomerization-deamination of glucosamine 6-phosphate (GlcN6P) to form fructose 6-phosphate (Fru6P) and ammonium ion. The protein is Glucosamine-6-phosphate deaminase of Streptococcus pyogenes serotype M49 (strain NZ131).